A 113-amino-acid chain; its full sequence is Regulator of rDNA transcription protein 7 (113 aa).

2 consecutive transmembrane segments (helical) span residues 13–35 (FLPI…LFYN) and 70–92 (FLLG…LLFL).

The protein localises to the membrane. Functionally, identified in a screen for mutants with decreased levels of rDNA transcription. This Saccharomyces cerevisiae (strain ATCC 204508 / S288c) (Baker's yeast) protein is Regulator of rDNA transcription protein 7 (RRT7).